Consider the following 145-residue polypeptide: Probable D-aminoacyl-tRNA deacylase (145 aa).

Belongs to the DTD family. In terms of assembly, homodimer.

Its subcellular location is the cytoplasm. It carries out the reaction glycyl-tRNA(Ala) + H2O = tRNA(Ala) + glycine + H(+). The enzyme catalyses a D-aminoacyl-tRNA + H2O = a tRNA + a D-alpha-amino acid + H(+). An aminoacyl-tRNA editing enzyme that deacylates mischarged D-aminoacyl-tRNAs. Also deacylates mischarged glycyl-tRNA(Ala), protecting cells against glycine mischarging by AlaRS. Acts via tRNA-based rather than protein-based catalysis; rejects L-amino acids rather than detecting D-amino acids in the active site. By recycling D-aminoacyl-tRNA to D-amino acids and free tRNA molecules, this enzyme counteracts the toxicity associated with the formation of D-aminoacyl-tRNA entities in vivo and helps enforce protein L-homochirality. The polypeptide is Probable D-aminoacyl-tRNA deacylase (Shigella flexneri serotype 5b (strain 8401)).